The primary structure comprises 321 residues: MIKLLYPKFWQKRNIIAYILFPISWIYQFLGFLRHVFVRPVILPAKVICVGNCSVGGTGKTQIVMYLANLLKTQNIDFVIVTKAYGSNLKEATIVKAEHSTLEVGDESVILAKHGTVIATKNIKQILPLIHELKPSIIIVDDFLQNPYFHKDITIVSVDRQRLFGNGFLIPAGPLREYPNRALSAADLVFLVGNNSGGIPVSLASYANKLIQAQIVASSDIDKNKNYFAFSGIGNPERFFLTLKNYGLNIVGYKIFPDHYNYLQEDLENLSLLAKTNNATLITTRKDYVKIGDSSDIIVCLDVKLSINNPNLLYEKIFKKD.

54–61 provides a ligand contact to ATP; sequence SVGGTGKT.

The protein belongs to the LpxK family.

It catalyses the reaction a lipid A disaccharide + ATP = a lipid IVA + ADP + H(+). The protein operates within glycolipid biosynthesis; lipid IV(A) biosynthesis; lipid IV(A) from (3R)-3-hydroxytetradecanoyl-[acyl-carrier-protein] and UDP-N-acetyl-alpha-D-glucosamine: step 6/6. Transfers the gamma-phosphate of ATP to the 4'-position of a tetraacyldisaccharide 1-phosphate intermediate (termed DS-1-P) to form tetraacyldisaccharide 1,4'-bis-phosphate (lipid IVA). The polypeptide is Tetraacyldisaccharide 4'-kinase (Rickettsia bellii (strain OSU 85-389)).